The primary structure comprises 143 residues: Large ribosomal subunit protein uL11 (143 aa).

This sequence belongs to the universal ribosomal protein uL11 family. As to quaternary structure, part of the ribosomal stalk of the 50S ribosomal subunit. Interacts with L10 and the large rRNA to form the base of the stalk. L10 forms an elongated spine to which L12 dimers bind in a sequential fashion forming a multimeric L10(L12)X complex. In terms of processing, one or more lysine residues are methylated.

In terms of biological role, forms part of the ribosomal stalk which helps the ribosome interact with GTP-bound translation factors. The protein is Large ribosomal subunit protein uL11 of Azotobacter vinelandii (strain DJ / ATCC BAA-1303).